The chain runs to 131 residues: Profilin-4 (131 aa).

This sequence belongs to the profilin family. Occurs in many kinds of cells as a complex with monomeric actin in a 1:1 ratio.

The protein localises to the cytoplasm. The protein resides in the cytoskeleton. Functionally, binds to actin and affects the structure of the cytoskeleton. At high concentrations, profilin prevents the polymerization of actin, whereas it enhances it at low concentrations. By binding to PIP2, it inhibits the formation of IP3 and DG. In Hevea brasiliensis (Para rubber tree), this protein is Profilin-4.